Reading from the N-terminus, the 64-residue chain is Prokaryotic ubiquitin-like protein Pup (64 aa).

Residues 1-37 (MAQEQTKRGGGGGDDDDIAGSTAAGQERREKLTEETD) are disordered. The tract at residues 21–58 (STAAGQERREKLTEETDDLLDEIDDVLEENAEDFVRAY) is ARC ATPase binding. Positions 23 to 52 (AAGQERREKLTEETDDLLDEIDDVLEENAE) form a coiled coil. A Deamidated glutamine modification is found at glutamine 64. Glutamine 64 participates in a covalent cross-link: Isoglutamyl lysine isopeptide (Gln-Lys) (interchain with K-? in acceptor proteins).

Belongs to the prokaryotic ubiquitin-like protein family. In terms of assembly, strongly interacts with the proteasome-associated ATPase ARC through a hydrophobic interface; the interacting region of Pup lies in its C-terminal half. There is one Pup binding site per ARC hexamer ring. Post-translationally, is modified by deamidation of its C-terminal glutamine to glutamate by the deamidase Dop, a prerequisite to the subsequent pupylation process.

Its pathway is protein degradation; proteasomal Pup-dependent pathway. In terms of biological role, protein modifier that is covalently attached to lysine residues of substrate proteins, thereby targeting them for proteasomal degradation. The tagging system is termed pupylation. This chain is Prokaryotic ubiquitin-like protein Pup, found in Mycobacterium tuberculosis (strain ATCC 25177 / H37Ra).